We begin with the raw amino-acid sequence, 183 residues long: Peptide deformylase (183 aa).

Fe cation-binding residues include C111 and H154. Residue E155 is part of the active site. H158 provides a ligand contact to Fe cation.

This sequence belongs to the polypeptide deformylase family. Fe(2+) is required as a cofactor.

It catalyses the reaction N-terminal N-formyl-L-methionyl-[peptide] + H2O = N-terminal L-methionyl-[peptide] + formate. Functionally, removes the formyl group from the N-terminal Met of newly synthesized proteins. Requires at least a dipeptide for an efficient rate of reaction. N-terminal L-methionine is a prerequisite for activity but the enzyme has broad specificity at other positions. The sequence is that of Peptide deformylase from Staphylococcus aureus (strain COL).